A 485-amino-acid chain; its full sequence is Dynein axonemal assembly factor 3 (485 aa).

The protein belongs to the DNAAF3 family.

It is found in the cytoplasm. The protein localises to the dynein axonemal particle. Functionally, required for the assembly of axonemal inner and outer dynein arms. Involved in preassembly of dyneins into complexes before their transport into cilia. The polypeptide is Dynein axonemal assembly factor 3 (dnaaf3) (Xenopus laevis (African clawed frog)).